The following is a 108-amino-acid chain: Large ribosomal subunit protein uL24 (108 aa).

It belongs to the universal ribosomal protein uL24 family. As to quaternary structure, part of the 50S ribosomal subunit.

One of two assembly initiator proteins, it binds directly to the 5'-end of the 23S rRNA, where it nucleates assembly of the 50S subunit. In terms of biological role, one of the proteins that surrounds the polypeptide exit tunnel on the outside of the subunit. The sequence is that of Large ribosomal subunit protein uL24 from Desulfosudis oleivorans (strain DSM 6200 / JCM 39069 / Hxd3) (Desulfococcus oleovorans).